Here is a 570-residue protein sequence, read N- to C-terminus: Urease subunit alpha (570 aa).

The Urease domain maps to 135–570 (GGLDIHIHFN…ELPLAKRYSL (436 aa)). Ni(2+) contacts are provided by histidine 140, histidine 142, and lysine 219. Position 219 is an N6-carboxylysine (lysine 219). Histidine 221 is a binding site for substrate. Ni(2+) contacts are provided by histidine 248 and histidine 274. Catalysis depends on histidine 322, which acts as the Proton donor. Aspartate 362 is a Ni(2+) binding site.

Belongs to the metallo-dependent hydrolases superfamily. Urease alpha subunit family. In terms of assembly, heterotrimer of UreA (gamma), UreB (beta) and UreC (alpha) subunits. Three heterotrimers associate to form the active enzyme. It depends on Ni cation as a cofactor. Post-translationally, carboxylation allows a single lysine to coordinate two nickel ions.

It localises to the cytoplasm. It carries out the reaction urea + 2 H2O + H(+) = hydrogencarbonate + 2 NH4(+). Its pathway is nitrogen metabolism; urea degradation; CO(2) and NH(3) from urea (urease route): step 1/1. The sequence is that of Urease subunit alpha from Haloquadratum walsbyi (strain DSM 16790 / HBSQ001).